The primary structure comprises 1339 residues: Retrotransposon Gag-like protein 9 (1339 aa).

3 stretches are compositionally biased toward polar residues: residues 533–545, 679–693, and 700–711; these read TVPT…TQKT, SGTK…TTSG, and TRLSGPGATSTP. 6 disordered regions span residues 533-555, 679-711, 845-864, 880-901, 982-1010, and 1078-1116; these read TVPT…PMST, SGTK…TSTP, GVMS…SRPQ, PATA…LSTL, ATSL…GAGS, and ATDS…PPKE. Over residues 891 to 901 the composition is skewed to low complexity; that stretch reads RSPASSTLSTL. The segment covering 1078-1106 has biased composition (polar residues); that stretch reads ATDSGEASTSHTRFTAPGSKSTPHMTSTA.

The chain is Retrotransposon Gag-like protein 9 from Mus musculus (Mouse).